Consider the following 129-residue polypeptide: MLHLHILSWVLAIILFIATYLNISKNQGGSPFFKPLHMILRLFMLLTLISGFWILIQSFMNGGANHMLLTLKMLCGVAVVGLMEVSIAKRKRHEQSHKMFWITMALIIITMVLGVILPLGPISKLFGIG.

4 consecutive transmembrane segments (helical) span residues 1–21 (MLHLHILSWVLAIILFIATYL), 36–56 (LHMILRLFMLLTLISGFWILI), 67–87 (MLLTLKMLCGVAVVGLMEVSI), and 99–119 (MFWITMALIIITMVLGVILPL).

It belongs to the UPF0344 family.

Its subcellular location is the cell membrane. The polypeptide is UPF0344 protein MW0851 (Staphylococcus aureus (strain MW2)).